The chain runs to 144 residues: Large ribosomal subunit protein uL15 (144 aa).

Residues M1–M57 form a disordered region. Residues R21–A31 show a composition bias toward gly residues.

It belongs to the universal ribosomal protein uL15 family. Part of the 50S ribosomal subunit.

In terms of biological role, binds to the 23S rRNA. The protein is Large ribosomal subunit protein uL15 of Thiobacillus denitrificans (strain ATCC 25259 / T1).